The sequence spans 118 residues: Large ribosomal subunit protein bL20 (118 aa).

The protein belongs to the bacterial ribosomal protein bL20 family.

Its function is as follows. Binds directly to 23S ribosomal RNA and is necessary for the in vitro assembly process of the 50S ribosomal subunit. It is not involved in the protein synthesizing functions of that subunit. The protein is Large ribosomal subunit protein bL20 of Acidiphilium cryptum (strain JF-5).